The sequence spans 22 residues: NDMA-dependent alcohol dehydrogenase (22 aa).

The protein belongs to the zinc-containing alcohol dehydrogenase family. In terms of assembly, homotetramer. NADH serves as cofactor.

The protein localises to the cytoplasm. It carries out the reaction N,N-dimethyl-4-nitrosoaniline + a primary alcohol = 4-(hydroxylamino)-N,N-dimethylaniline + an aldehyde. The enzyme catalyses ethanol + A = acetaldehyde + AH2. Functionally, this is a novel enzyme, catalytically different from common alcohol dehydrogenases. It is effective in oxidizing ethanol, other primary alcohols and benzylalcohol only in the presence of p-nitroso-N,N-dimethylaniline (NDMA) as an electron acceptor. NADH acts as a cofactor here instead of as a coenzyme. The protein is NDMA-dependent alcohol dehydrogenase of Rhodococcus erythropolis (Arthrobacter picolinophilus).